Here is an 808-residue protein sequence, read N- to C-terminus: Probable potassium transporter 3 (808 aa).

At 1–34 (MPVADCESGLSPADVTGAGAANGNPGHWRSYYRH) the chain is on the cytoplasmic side. Residues 35 to 55 (VLLLAYQSCGVVYGDLSTSPL) traverse the membrane as a helical segment. Residues 56–81 (YVYKSTFIIGSLRRFQDEEIVFGVFS) are Extracellular-facing. Residues 82-102 (LVFWTLTLIPLLKYVFIVLAA) form a helical membrane-spanning segment. Topologically, residues 103 to 167 (DDNGEGGTFA…FLENHRKSRT (65 aa)) are cytoplasmic. Residues 168–188 (FLLVTVLFGASLVIGDGVLTP) traverse the membrane as a helical segment. At 189–204 (PMSVLSSFSGLQVHST) the chain is on the extracellular side. A helical membrane pass occupies residues 205-225 (ALTSGEVEILSCTVLVCLFMV). The Cytoplasmic segment spans residues 226 to 232 (QHWGTHR). A helical transmembrane segment spans residues 233–253 (VAFLFAPVVIVWLLLLGALGV). The Extracellular portion of the chain corresponds to 254–283 (YNIVVWNPRVLRALSPYYLVRFFQHTGKDG). A helical transmembrane segment spans residues 284-304 (WISLGGILLSMTGTEAMYADL). The Cytoplasmic portion of the chain corresponds to 305–313 (GHFTAASIR). The helical transmembrane segment at 314–334 (VAFVGLIYPCLVLQYMGQAAF) threads the bilayer. At 335 to 354 (LSKSPHCDIHFVFFESIPTG) the chain is on the extracellular side. Residues 355 to 375 (IFWPVLVIATLAAIVGSQAVI) traverse the membrane as a helical segment. At 376–406 (SATFSIVRQCTALGCFPRVKIVHTSRRIHGQ) the chain is on the cytoplasmic side. The helical transmembrane segment at 407 to 427 (IYSPEINWILMLLCIAVTMGL) threads the bilayer. Topologically, residues 428–439 (RDTTLIGNAYGM) are extracellular. A helical membrane pass occupies residues 440-460 (ACAGVMLVTTLLMALVIVFVW). The Cytoplasmic portion of the chain corresponds to 461–464 (QYSC). A helical membrane pass occupies residues 465 to 485 (LVAALFLVAFGVVEAVYLSAA). Residues 486-491 (LMKVPQ) are Extracellular-facing. Residues 492–512 (GGWLPLVLSLVFVAVMYVWHY) traverse the membrane as a helical segment. Over 513-808 (GTRRKHQFDV…LIEVGMIYYV (296 aa)) the chain is Cytoplasmic.

It belongs to the HAK/KUP transporter (TC 2.A.72.3) family.

Its subcellular location is the membrane. Functionally, high-affinity potassium transporter. This is Probable potassium transporter 3 (HAK3) from Oryza sativa subsp. japonica (Rice).